The primary structure comprises 276 residues: ATP synthase subunit a (276 aa).

6 consecutive transmembrane segments (helical) span residues 27–47, 61–81, 120–140, 159–179, 225–245, and 246–266; these read ITML…LEVG, GQTF…SLAA, LPFI…GALL, DINT…YAGL, LVVA…LMAL, and GLFT…AYIH.

The protein belongs to the ATPase A chain family. F-type ATPases have 2 components, CF(1) - the catalytic core - and CF(0) - the membrane proton channel. CF(1) has five subunits: alpha(3), beta(3), gamma(1), delta(1), epsilon(1). CF(0) has four main subunits: a, b, b' and c.

Its subcellular location is the cellular thylakoid membrane. In terms of biological role, key component of the proton channel; it plays a direct role in the translocation of protons across the membrane. In Synechocystis sp. (strain ATCC 27184 / PCC 6803 / Kazusa), this protein is ATP synthase subunit a.